Here is a 318-residue protein sequence, read N- to C-terminus: Putative fimbrium tip subunit Fim1F (318 aa).

A signal peptide spans 1–24 (MRFNVVLFMLIVALLGGLSTCSSE). A propeptide spanning residues 25–50 (VPIGFDTDELSFDMSLVLLTGDMQTK) is cleaved from the precursor.

The protein belongs to the bacteroidetes fimbrillin superfamily. FimA/Mfa1 family. May be part of the fimbrial tip.

The protein resides in the fimbrium. Putative component of the fimbrium tip. Fimbriae are filamentous appendages on the cell surface that mediate cell adhesion and biofilm formation. The polypeptide is Putative fimbrium tip subunit Fim1F (Parabacteroides distasonis (strain ATCC 8503 / DSM 20701 / CIP 104284 / JCM 5825 / NCTC 11152)).